Here is a 371-residue protein sequence, read N- to C-terminus: DNA-directed RNA polymerase subunit alpha (371 aa).

The segment at 1-248 (MSVKYGKFEM…KHFEVFNQFN (248 aa)) is alpha N-terminal domain (alpha-NTD). The tract at residues 264 to 371 (DQDELMDKLS…KELVKHEDAK (108 aa)) is alpha C-terminal domain (alpha-CTD).

This sequence belongs to the RNA polymerase alpha chain family. Homodimer. The RNAP catalytic core consists of 2 alpha, 1 beta, 1 beta' and 1 omega subunit. When a sigma factor is associated with the core the holoenzyme is formed, which can initiate transcription.

The catalysed reaction is RNA(n) + a ribonucleoside 5'-triphosphate = RNA(n+1) + diphosphate. Its function is as follows. DNA-dependent RNA polymerase catalyzes the transcription of DNA into RNA using the four ribonucleoside triphosphates as substrates. In Protochlamydia amoebophila (strain UWE25), this protein is DNA-directed RNA polymerase subunit alpha.